The following is a 322-amino-acid chain: Ferrochelatase (322 aa).

The Fe cation site is built by His193 and Glu274.

It belongs to the ferrochelatase family.

It is found in the cytoplasm. It catalyses the reaction heme b + 2 H(+) = protoporphyrin IX + Fe(2+). The protein operates within porphyrin-containing compound metabolism; protoheme biosynthesis; protoheme from protoporphyrin-IX: step 1/1. Its function is as follows. Catalyzes the ferrous insertion into protoporphyrin IX. The chain is Ferrochelatase from Photobacterium profundum (strain SS9).